Reading from the N-terminus, the 214-residue chain is ATP phosphoribosyltransferase (214 aa).

This sequence belongs to the ATP phosphoribosyltransferase family. Short subfamily. In terms of assembly, heteromultimer composed of HisG and HisZ subunits.

It is found in the cytoplasm. The catalysed reaction is 1-(5-phospho-beta-D-ribosyl)-ATP + diphosphate = 5-phospho-alpha-D-ribose 1-diphosphate + ATP. The protein operates within amino-acid biosynthesis; L-histidine biosynthesis; L-histidine from 5-phospho-alpha-D-ribose 1-diphosphate: step 1/9. Functionally, catalyzes the condensation of ATP and 5-phosphoribose 1-diphosphate to form N'-(5'-phosphoribosyl)-ATP (PR-ATP). Has a crucial role in the pathway because the rate of histidine biosynthesis seems to be controlled primarily by regulation of HisG enzymatic activity. This Azoarcus sp. (strain BH72) protein is ATP phosphoribosyltransferase.